The chain runs to 99 residues: Acylphosphatase (99 aa).

An Acylphosphatase-like domain is found at 5-97 (ILQVMIRGRV…RAGEKFSVLP (93 aa)). Catalysis depends on residues Arg-20 and Asn-38.

The protein belongs to the acylphosphatase family.

The catalysed reaction is an acyl phosphate + H2O = a carboxylate + phosphate + H(+). This is Acylphosphatase (acyP) from Bradyrhizobium diazoefficiens (strain JCM 10833 / BCRC 13528 / IAM 13628 / NBRC 14792 / USDA 110).